The primary structure comprises 82 residues: Large ribosomal subunit protein bL31B-2 (82 aa).

Belongs to the bacterial ribosomal protein bL31 family. Type B subfamily. As to quaternary structure, part of the 50S ribosomal subunit.

This Streptomyces avermitilis (strain ATCC 31267 / DSM 46492 / JCM 5070 / NBRC 14893 / NCIMB 12804 / NRRL 8165 / MA-4680) protein is Large ribosomal subunit protein bL31B-2.